A 260-amino-acid polypeptide reads, in one-letter code: Outer membrane protein assembly factor BamD (260 aa).

Positions 1-19 (MRKLKSFTFIALTAFAITA) are cleaved as a signal peptide. C20 is lipidated: N-palmitoyl cysteine. C20 is lipidated: S-diacylglycerol cysteine.

Belongs to the BamD family. As to quaternary structure, part of the Bam complex.

The protein resides in the cell outer membrane. Functionally, part of the outer membrane protein assembly complex, which is involved in assembly and insertion of beta-barrel proteins into the outer membrane. The sequence is that of Outer membrane protein assembly factor BamD from Pasteurella multocida (strain Pm70).